Reading from the N-terminus, the 68-residue chain is U4-agatoxin-Ao1a (68 aa).

A signal peptide spans 1–25 (MKKSTVIVLSLAAFVLLSVMQFSAA). The propeptide occupies 26–36 (EDIKMEVEEQR). Intrachain disulfides connect Cys-39–Cys-52, Cys-46–Cys-57, Cys-51–Cys-66, and Cys-59–Cys-64.

This sequence belongs to the neurotoxin 33 family. In terms of tissue distribution, expressed by the venom gland.

It is found in the secreted. The sequence is that of U4-agatoxin-Ao1a from Agelena orientalis (Funnel-web spider).